A 500-amino-acid chain; its full sequence is Plexin domain-containing protein 1 (500 aa).

An N-terminal signal peptide occupies residues M1–A18. Residues L19 to T426 lie on the Extracellular side of the membrane. Disordered stretches follow at residues S20–G39 and R46–P78. A glycan (O-linked (Xyl...) (chondroitin sulfate) serine) is linked at S33. Over residues R47 to R60 the composition is skewed to basic and acidic residues. N-linked (GlcNAc...) asparagine glycans are attached at residues N80 and N197. Positions F359–D379 are disordered. A compositionally biased stretch (polar residues) spans S368–D379. The helical transmembrane segment at I427–I447 threads the bilayer. The Cytoplasmic portion of the chain corresponds to N448 to C500. The segment covering S479–F494 has biased composition (basic and acidic residues). The disordered stretch occupies residues S479–C500.

It belongs to the plexin family. As to quaternary structure, interacts with NID1. May interact with CTTN. N-glycosylated. In terms of tissue distribution, detected in urine (at protein level). Detected in endothelial cells from colorectal cancer, and in endothelial cells from primary cancers of the lung, liver, pancreas, breast and brain. Not detectable in endothelial cells from normal tissue. Expressed in fibrovascular membrane with increased expression in individuals with proliferative diabetic retinopathy.

Its subcellular location is the secreted. The protein localises to the cell membrane. It localises to the cell junction. It is found in the tight junction. The protein resides in the cytoplasm. Plays a critical role in endothelial cell capillary morphogenesis. This chain is Plexin domain-containing protein 1 (PLXDC1), found in Homo sapiens (Human).